A 367-amino-acid polypeptide reads, in one-letter code: Nuclear hormone receptor-like 1 (367 aa).

The segment at residues 32-107 (GQPCVVCGDD…NGMTKSLVLN (76 aa)) is a DNA-binding region (nuclear receptor). 2 NR C4-type zinc fingers span residues 35–55 (CVVC…CEGC) and 71–95 (CKSI…FQKC). The 223-residue stretch at 145 to 367 (EFQSRIDQVT…IANILLFKFT (223 aa)) folds into the NR LBD domain.

Belongs to the nuclear hormone receptor family.

It localises to the nucleus. The chain is Nuclear hormone receptor-like 1 (nhr-1) from Onchocerca volvulus.